Here is a 278-residue protein sequence, read N- to C-terminus: Rhomboid protease GlpG (278 aa).

A run of 6 helical transmembrane segments spans residues 95–115 (GPLT…MQIV), 143–163 (AFLH…WYLA), 170–190 (LGTG…GWGQ), 192–212 (LFSG…MGYV), 224–241 (ISLP…LVAG), and 245–267 (ILGL…LMAF). Ser202 acts as the Nucleophile in catalysis. His255 is a catalytic residue.

Belongs to the peptidase S54 family.

It is found in the cell inner membrane. It catalyses the reaction Cleaves type-1 transmembrane domains using a catalytic dyad composed of serine and histidine that are contributed by different transmembrane domains.. Rhomboid-type serine protease that catalyzes intramembrane proteolysis. In Yersinia enterocolitica serotype O:8 / biotype 1B (strain NCTC 13174 / 8081), this protein is Rhomboid protease GlpG.